A 798-amino-acid polypeptide reads, in one-letter code: Phenylalanine--tRNA ligase beta subunit (798 aa).

The tRNA-binding domain maps to 39 to 148 (GKDLDNVVIG…EDAPIGTEYR (110 aa)). In terms of domain architecture, B5 spans 401–477 (PQRAEISLNL…RMYGFDNIEA (77 aa)). The Mg(2+) site is built by Asp455, Asp461, Glu464, and Glu465. The 93-residue stretch at 705–797 (SKYPEVLRDL…IKDKYNGEIR (93 aa)) folds into the FDX-ACB domain.

Belongs to the phenylalanyl-tRNA synthetase beta subunit family. Type 1 subfamily. As to quaternary structure, tetramer of two alpha and two beta subunits. The cofactor is Mg(2+).

It localises to the cytoplasm. The catalysed reaction is tRNA(Phe) + L-phenylalanine + ATP = L-phenylalanyl-tRNA(Phe) + AMP + diphosphate + H(+). This Fusobacterium nucleatum subsp. nucleatum (strain ATCC 25586 / DSM 15643 / BCRC 10681 / CIP 101130 / JCM 8532 / KCTC 2640 / LMG 13131 / VPI 4355) protein is Phenylalanine--tRNA ligase beta subunit.